Here is a 907-residue protein sequence, read N- to C-terminus: DNA ligase 4 (907 aa).

Residues Glu-273, Lys-275, Arg-280, Glu-333, Phe-378, Glu-438, Lys-443, Lys-460, and Lys-462 each contribute to the ATP site. Lys-275 serves as the catalytic N6-AMP-lysine intermediate. Glu-333 provides a ligand contact to Mg(2+). Residue Glu-438 coordinates Mg(2+). 2 BRCT domains span residues 655–754 (PVSN…ESDI) and 800–906 (VPLF…HYQC).

It belongs to the ATP-dependent DNA ligase family. It depends on Mg(2+) as a cofactor.

The protein resides in the nucleus. The enzyme catalyses ATP + (deoxyribonucleotide)n-3'-hydroxyl + 5'-phospho-(deoxyribonucleotide)m = (deoxyribonucleotide)n+m + AMP + diphosphate.. In terms of biological role, DNA ligase involved in DNA non-homologous end joining (NHEJ); required for double-strand break (DSB) repair. In Kluyveromyces lactis (strain ATCC 8585 / CBS 2359 / DSM 70799 / NBRC 1267 / NRRL Y-1140 / WM37) (Yeast), this protein is DNA ligase 4 (LIG4).